The chain runs to 509 residues: Solute carrier family 2, facilitated glucose transporter member 4 (509 aa).

Topologically, residues 1–24 (MPSGFQQIGSEDGEPPRQRVTGTL) are cytoplasmic. The interval 7–13 (QIGSEDG) is interaction with SRFBP1. Serine 10 bears the Phosphoserine mark. Residues 25–45 (VLAVFSAVLGSLQFGYNIGVI) form a helical membrane-spanning segment. At 46–81 (NAPQKVIEQSYNETWLGRQGPEGPGSIPPGTLTTLW) the chain is on the extracellular side. An N-linked (GlcNAc...) asparagine glycan is attached at asparagine 57. The helical transmembrane segment at 82–102 (ALSVAIFSVGGMISSFLIGII) threads the bilayer. Residues 103–111 (SQWLGRKRA) lie on the Cytoplasmic side of the membrane. The chain crosses the membrane as a helical span at residues 112–132 (MLFNNALAVLGGTLMGLAKAA). Over 133 to 142 (ASYEMLILGR) the chain is Extracellular. Residues 143–163 (FFIGAYSGLTSGLVPMYVGEI) traverse the membrane as a helical segment. The Cytoplasmic portion of the chain corresponds to 164–171 (APTHLRGA). A helical transmembrane segment spans residues 172–192 (LGTLNQLAIVTGILIAQVLGL). Glutamine 177 contributes to the D-glucose binding site. Residues 193–200 (ESMLGTAT) are Extracellular-facing. Residues 201–221 (LWPLLLGITVLPALLQMVLLP) form a helical membrane-spanning segment. Residues 222–287 (LCPESPRYLY…LLGSHTHRQP (66 aa)) are Cytoplasmic-facing. Cysteine 223 is lipidated: S-palmitoyl cysteine. Residue serine 274 is modified to Phosphoserine; by SGK1. A helical transmembrane segment spans residues 288–308 (LVIAIVLQLSQQLSGINAVFY). D-glucose-binding positions include 298-299 (QQ) and asparagine 304. Residues 309–323 (YSTSIFESAGVEKPA) are Extracellular-facing. A helical membrane pass occupies residues 324–344 (YATIGAGVVNTVFTLVSVFLV). Asparagine 333 serves as a coordination point for D-glucose. Residues 345-353 (ERAGRRTLH) lie on the Cytoplasmic side of the membrane. A helical membrane pass occupies residues 354 to 374 (LLGLAGMCGCAILMTVALLLL). Over 375-384 (ERVPAMSYVS) the chain is Extracellular. The chain crosses the membrane as a helical span at residues 385 to 405 (IVAIFGFVAFFEIGPGPIPWF). The D-glucose site is built by glutamate 396 and tryptophan 404. At 406–417 (IVAELFSQGPRP) the chain is on the cytoplasmic side. Residues 418 to 438 (AAMAVAGFSNWTCNFIIGMGF) form a helical membrane-spanning segment. Residues 439–445 (QYVADAM) are Extracellular-facing. A helical transmembrane segment spans residues 446 to 466 (GPYVFLLFAVLLLGFFIFTFL). At 467–509 (KVPETRGRTFDQISAVFHRTPSLLEQEVKPSTELEYLGPDEHD) the chain is on the cytoplasmic side. At threonine 486 the chain carries Phosphothreonine. At serine 488 the chain carries Phosphoserine. The short motif at 489–490 (LL) is the Dileucine internalization motif element.

The protein belongs to the major facilitator superfamily. Sugar transporter (TC 2.A.1.1) family. Glucose transporter subfamily. Binds to DAXX. Interacts via its N-terminus with SRFBP1. Interacts with NDUFA9. Interacts with TRARG1; the interaction is required for proper SLC2A4 recycling after insulin stimulation. Post-translationally, sumoylated. In terms of processing, palmitoylated. Palmitoylation by ZDHHC7 controls the insulin-dependent translocation of GLUT4 to the plasma membrane.

It is found in the cell membrane. It localises to the endomembrane system. The protein localises to the cytoplasm. The protein resides in the perinuclear region. The catalysed reaction is D-glucose(out) = D-glucose(in). Insulin-regulated facilitative glucose transporter, which plays a key role in removal of glucose from circulation. Response to insulin is regulated by its intracellular localization: in the absence of insulin, it is efficiently retained intracellularly within storage compartments in muscle and fat cells. Upon insulin stimulation, translocates from these compartments to the cell surface where it transports glucose from the extracellular milieu into the cell. The sequence is that of Solute carrier family 2, facilitated glucose transporter member 4 from Bos taurus (Bovine).